Reading from the N-terminus, the 458-residue chain is Bifunctional protein GlmU (458 aa).

The pyrophosphorylase stretch occupies residues 1 to 228 (MHPKLDILIL…DWEVLGVNSK (228 aa)). UDP-N-acetyl-alpha-D-glucosamine-binding positions include 10–13 (LAAG), K24, Q75, 80–81 (GT), 102–104 (YGD), G139, E153, N168, and N226. Position 104 (D104) interacts with Mg(2+). N226 lines the Mg(2+) pocket. The segment at 229–249 (AQLAELERIHQNEVAQRLLAD) is linker. The segment at 250–458 (GVTLMDPARL…KRPIKPKKEG (209 aa)) is N-acetyltransferase. Residues R332 and K350 each contribute to the UDP-N-acetyl-alpha-D-glucosamine site. Residue H362 is the Proton acceptor of the active site. Positions 365 and 376 each coordinate UDP-N-acetyl-alpha-D-glucosamine. Residues A379, 385–386 (NY), S404, A422, and R439 each bind acetyl-CoA.

In the N-terminal section; belongs to the N-acetylglucosamine-1-phosphate uridyltransferase family. The protein in the C-terminal section; belongs to the transferase hexapeptide repeat family. As to quaternary structure, homotrimer. Mg(2+) serves as cofactor.

It is found in the cytoplasm. The catalysed reaction is alpha-D-glucosamine 1-phosphate + acetyl-CoA = N-acetyl-alpha-D-glucosamine 1-phosphate + CoA + H(+). The enzyme catalyses N-acetyl-alpha-D-glucosamine 1-phosphate + UTP + H(+) = UDP-N-acetyl-alpha-D-glucosamine + diphosphate. The protein operates within nucleotide-sugar biosynthesis; UDP-N-acetyl-alpha-D-glucosamine biosynthesis; N-acetyl-alpha-D-glucosamine 1-phosphate from alpha-D-glucosamine 6-phosphate (route II): step 2/2. Its pathway is nucleotide-sugar biosynthesis; UDP-N-acetyl-alpha-D-glucosamine biosynthesis; UDP-N-acetyl-alpha-D-glucosamine from N-acetyl-alpha-D-glucosamine 1-phosphate: step 1/1. It participates in bacterial outer membrane biogenesis; LPS lipid A biosynthesis. Functionally, catalyzes the last two sequential reactions in the de novo biosynthetic pathway for UDP-N-acetylglucosamine (UDP-GlcNAc). The C-terminal domain catalyzes the transfer of acetyl group from acetyl coenzyme A to glucosamine-1-phosphate (GlcN-1-P) to produce N-acetylglucosamine-1-phosphate (GlcNAc-1-P), which is converted into UDP-GlcNAc by the transfer of uridine 5-monophosphate (from uridine 5-triphosphate), a reaction catalyzed by the N-terminal domain. This Thiobacillus denitrificans (strain ATCC 25259 / T1) protein is Bifunctional protein GlmU.